A 390-amino-acid chain; its full sequence is Neuromedin-B receptor (390 aa).

The disordered stretch occupies residues 1 to 20 (MPPRSLPNLSLPTEASESEL). Topologically, residues 1-41 (MPPRSLPNLSLPTEASESELEPEVWENDFLPDSDGTTAELV) are extracellular. Residue asparagine 8 is glycosylated (N-linked (GlcNAc...) asparagine). Residues 42–65 (IRCVIPSLYLIIISVGLLGNIMLV) form a helical membrane-spanning segment. Over 66-79 (KIFLTNSTMRSVPN) the chain is Cytoplasmic. The chain crosses the membrane as a helical span at residues 80–99 (IFISNLAAGDLLLLLTCVPV). The Extracellular segment spans residues 100–117 (DASRYFFDEWVFGKLGCK). An intrachain disulfide couples cysteine 116 to cysteine 198. The helical transmembrane segment at 118–139 (LIPAIQLTSVGVSVFTLTALSA) threads the bilayer. Residues 140–156 (DRYRAIVNPMDMQTSGV) are Cytoplasmic-facing. The helical transmembrane segment at 157–177 (VLWTSLKAVGIWVVSVLLAVP) threads the bilayer. The Extracellular portion of the chain corresponds to 178–211 (EAVFSEVARIGSSDNSSFTACIPYPQTDELHPKI). N-linked (GlcNAc...) asparagine glycosylation occurs at asparagine 192. A helical transmembrane segment spans residues 212–235 (HSVLIFLVYFLIPLVIISIYYYHI). Over 236–266 (AKTLIRSAHNLPGEYNEHTKKQMETRKRLAK) the chain is Cytoplasmic. The chain crosses the membrane as a helical span at residues 267-287 (IVLVFVGCFVFCWFPNHILYL). Over 288-299 (YRSFNYKEIDPS) the chain is Extracellular. A helical transmembrane segment spans residues 300-327 (LGHMIVTLVARVLSFSNSCVNPFALYLL). Topologically, residues 328–390 (SESFRKHFNS…GHSTKQEIAL (63 aa)) are cytoplasmic. Residue cysteine 341 is the site of S-palmitoyl cysteine attachment. Phosphoserine is present on serine 352.

Belongs to the G-protein coupled receptor 1 family. In terms of tissue distribution, brain (olfactory bulb and central thalamic regions), and esophagus.

It localises to the cell membrane. Its function is as follows. Receptor for neuromedin-B. Contributes to the maintenance of basal sigh rate through signaling in the pre-Botzinger complex, a cluster of several thousand neurons in the ventrolateral medulla responsible for inspiration during respiratory activity. Contributes to the induction of sneezing following exposure to chemical irritants or allergens which causes release of NMB by nasal sensory neurons and activation of NMBR-expressing neurons in the sneeze-evoking region of the brainstem. These in turn activate neurons of the caudal ventral respiratory group, giving rise to the sneezing response. Contributes to induction of acute itch, possibly through its activation on dorsal root ganglion neurons by the NMB peptide. Plays a role in the innate immune response to influenza A virus infection by enhancing interferon alpha expression and reducing expression of IL6. Plays a role in CSF1-induced proliferation of osteoclast precursors by contributing to the positive regulation of the expression of the CSF1 receptor CSF1R. This chain is Neuromedin-B receptor (Nmbr), found in Rattus norvegicus (Rat).